Reading from the N-terminus, the 1181-residue chain is WD repeat-containing protein 35 (1181 aa).

WD repeat units lie at residues 4–43 (YLSK…VLKL), 61–100 (LSMN…VWML), 105–143 (WIEE…IVGS), 147–185 (NRIW…IYDN), 193–241 (MKLS…IMRH), and 246–288 (NPVL…IVQF).

As to quaternary structure, component of the IFT complex A (IFT-A) complex. IFT-A complex is divided into a core subcomplex composed of IFT122:IFT140:WDR19 which is associated with TULP3 and a peripheral subcomplex composed of IFT43:WDR35:TTC21B. Interacts directy with IFT122, ITF43 and TTC21B. Interacts with IFT43. Interacts with CFAP61.

Its subcellular location is the cytoplasm. It is found in the cytoskeleton. The protein localises to the microtubule organizing center. It localises to the centrosome. The protein resides in the cilium axoneme. Its subcellular location is the cilium basal body. Functionally, as a component of the IFT complex A (IFT-A), a complex required for retrograde ciliary transport and entry into cilia of G protein-coupled receptors (GPCRs), it is involved in ciliogenesis and ciliary protein trafficking. May promote CASP3 activation and TNF-stimulated apoptosis. In Homo sapiens (Human), this protein is WD repeat-containing protein 35.